The chain runs to 381 residues: Putative 8-amino-7-oxononanoate synthase (381 aa).

Residue arginine 20 coordinates substrate. Residue 107–108 participates in pyridoxal 5'-phosphate binding; the sequence is GY. Histidine 132 lines the substrate pocket. Residues serine 180, 205–208, and 236–239 contribute to the pyridoxal 5'-phosphate site; these read DEAH and TLSK. An N6-(pyridoxal phosphate)lysine modification is found at lysine 239. Threonine 351 serves as a coordination point for substrate.

Belongs to the class-II pyridoxal-phosphate-dependent aminotransferase family. BioF subfamily. In terms of assembly, homodimer. Pyridoxal 5'-phosphate is required as a cofactor.

It catalyses the reaction 6-carboxyhexanoyl-[ACP] + L-alanine + H(+) = (8S)-8-amino-7-oxononanoate + holo-[ACP] + CO2. It participates in cofactor biosynthesis; biotin biosynthesis. Its function is as follows. Catalyzes the decarboxylative condensation of pimeloyl-[acyl-carrier protein] and L-alanine to produce 8-amino-7-oxononanoate (AON), [acyl-carrier protein], and carbon dioxide. The polypeptide is Putative 8-amino-7-oxononanoate synthase (bioF) (Rippkaea orientalis (strain PCC 8801 / RF-1) (Cyanothece sp. (strain PCC 8801))).